The chain runs to 143 residues: Large ribosomal subunit protein eL28z (143 aa).

The protein belongs to the eukaryotic ribosomal protein eL28 family. In terms of assembly, component of the large ribosomal subunit. In terms of tissue distribution, expressed in seedlings, roots, stems, leaves, inflorescences and siliques.

It localises to the cytoplasm. The protein resides in the nucleus. The protein localises to the nucleolus. Its subcellular location is the nucleoplasm. Its function is as follows. Component of the large ribosomal subunit. Essential in leaf polarity establishment, probably having a role for translation in leaf dorsoventral patterning to specify leaf adaxial identity. The protein is Large ribosomal subunit protein eL28z of Arabidopsis thaliana (Mouse-ear cress).